A 155-amino-acid polypeptide reads, in one-letter code: Lipoprotein signal peptidase (155 aa).

Helical transmembrane passes span 52–72 and 85–105; these read ILQGQMWFFYVITLVVIAGIV and LGVALALMLGGAIGNFIDRVF. Active-site residues include Asp-111 and Asp-129. The chain crosses the membrane as a helical span at residues 124–144; that stretch reads IFNIADSSLCVGVILLFIQML.

This sequence belongs to the peptidase A8 family.

It is found in the cell membrane. It carries out the reaction Release of signal peptides from bacterial membrane prolipoproteins. Hydrolyzes -Xaa-Yaa-Zaa-|-(S,diacylglyceryl)Cys-, in which Xaa is hydrophobic (preferably Leu), and Yaa (Ala or Ser) and Zaa (Gly or Ala) have small, neutral side chains.. The protein operates within protein modification; lipoprotein biosynthesis (signal peptide cleavage). Functionally, this protein specifically catalyzes the removal of signal peptides from prolipoproteins. This Bacillus pumilus (strain SAFR-032) protein is Lipoprotein signal peptidase.